Here is a 1403-residue protein sequence, read N- to C-terminus: DNA-directed RNA polymerase subunit beta' (1403 aa).

Residues Cys-70, Cys-72, Cys-85, and Cys-88 each coordinate Zn(2+). Mg(2+) contacts are provided by Asp-461, Asp-463, and Asp-465. The Zn(2+) site is built by Cys-816, Cys-890, Cys-897, and Cys-900.

Belongs to the RNA polymerase beta' chain family. In terms of assembly, the RNAP catalytic core consists of 2 alpha, 1 beta, 1 beta' and 1 omega subunit. When a sigma factor is associated with the core the holoenzyme is formed, which can initiate transcription. The cofactor is Mg(2+). Zn(2+) serves as cofactor.

The catalysed reaction is RNA(n) + a ribonucleoside 5'-triphosphate = RNA(n+1) + diphosphate. Functionally, DNA-dependent RNA polymerase catalyzes the transcription of DNA into RNA using the four ribonucleoside triphosphates as substrates. The protein is DNA-directed RNA polymerase subunit beta' of Dechloromonas aromatica (strain RCB).